Consider the following 291-residue polypeptide: U3 small nucleolar ribonucleoprotein protein IMP4 (291 aa).

In terms of domain architecture, Brix spans 83-264; that stretch reads PKVMITTSRD…LYMIRLGTLE (182 aa).

In terms of assembly, part of the small subunit (SSU) processome, composed of more than 70 proteins and the RNA chaperone small nucleolar RNA (snoRNA) U3. Component of a heterotrimeric complex containing IMP3, IMP4 and MPHOSPH10. Interacts with MPHOSPH10.

The protein resides in the nucleus. Its subcellular location is the nucleolus. Its function is as follows. Component of the 60-80S U3 small nucleolar ribonucleoprotein (U3 snoRNP). Required for the early cleavages during pre-18S ribosomal RNA processing. Part of the small subunit (SSU) processome, first precursor of the small eukaryotic ribosomal subunit. During the assembly of the SSU processome in the nucleolus, many ribosome biogenesis factors, an RNA chaperone and ribosomal proteins associate with the nascent pre-rRNA and work in concert to generate RNA folding, modifications, rearrangements and cleavage as well as targeted degradation of pre-ribosomal RNA by the RNA exosome. The sequence is that of U3 small nucleolar ribonucleoprotein protein IMP4 from Homo sapiens (Human).